The sequence spans 335 residues: Methionine import ATP-binding protein MetN (335 aa).

One can recognise an ABC transporter domain in the interval 2 to 241; it reads IQFQRLHKSY…PKHATTRRFV (240 aa). 38–45 is a binding site for ATP; sequence GHSGAGKS.

This sequence belongs to the ABC transporter superfamily. Methionine importer (TC 3.A.1.24) family. As to quaternary structure, the complex is composed of two ATP-binding proteins (MetN), two transmembrane proteins (MetI) and a solute-binding protein (MetQ).

The protein localises to the cell inner membrane. The catalysed reaction is L-methionine(out) + ATP + H2O = L-methionine(in) + ADP + phosphate + H(+). It carries out the reaction D-methionine(out) + ATP + H2O = D-methionine(in) + ADP + phosphate + H(+). Part of the ABC transporter complex MetNIQ involved in methionine import. Responsible for energy coupling to the transport system. In Xanthomonas euvesicatoria pv. vesicatoria (strain 85-10) (Xanthomonas campestris pv. vesicatoria), this protein is Methionine import ATP-binding protein MetN.